Consider the following 289-residue polypeptide: Acetylglutamate kinase (289 aa).

Substrate-binding positions include 65-66, Arg-87, and Asn-187; that span reads GG.

It belongs to the acetylglutamate kinase family. ArgB subfamily.

It is found in the cytoplasm. It catalyses the reaction N-acetyl-L-glutamate + ATP = N-acetyl-L-glutamyl 5-phosphate + ADP. It functions in the pathway amino-acid biosynthesis; L-arginine biosynthesis; N(2)-acetyl-L-ornithine from L-glutamate: step 2/4. Its function is as follows. Catalyzes the ATP-dependent phosphorylation of N-acetyl-L-glutamate. In Chromobacterium violaceum (strain ATCC 12472 / DSM 30191 / JCM 1249 / CCUG 213 / NBRC 12614 / NCIMB 9131 / NCTC 9757 / MK), this protein is Acetylglutamate kinase.